The primary structure comprises 555 residues: Formate--tetrahydrofolate ligase (555 aa).

Residue 65-72 (TPAGEGKS) coordinates ATP.

It belongs to the formate--tetrahydrofolate ligase family.

The catalysed reaction is (6S)-5,6,7,8-tetrahydrofolate + formate + ATP = (6R)-10-formyltetrahydrofolate + ADP + phosphate. It participates in one-carbon metabolism; tetrahydrofolate interconversion. The sequence is that of Formate--tetrahydrofolate ligase from Staphylococcus aureus (strain NCTC 8325 / PS 47).